The sequence spans 507 residues: uncharacterized protein (507 aa).

14 consecutive transmembrane segments (helical) span residues 8-28, 41-61, 86-106, 130-150, 171-191, 193-213, 235-255, 275-295, 323-343, 355-375, 387-407, 408-428, 444-464, and 467-487; these read VKGVSWHLLSYFLAAPIAYLV, VGLFYAVLDFFSMLVVFRAFG, IVFVGILQTILAFIVAFLVVI, INILIIMAMGYYFLDSIVAFF, ILSVFIFSLIFIYLFNVHNAY, PSVSYLLMAVVMIIIYGYIVV, LFSYGMYVMIGYAGSLILGYL, VAMPTVNILSYFAFSVGAVLF, IIVTPLAILMAYFPTVIINIL, IQILSFGAMFLTFNSIGFNIL, ILYIGASFNLIFNILLIPKFG, IIGAAITTVFGYFIMWIFQIW, ILVILVGIFSLIPVMFIKDLI, and VILQLFVCGVVYFGIYILGIF.

Belongs to the polysaccharide synthase family.

The protein localises to the cell membrane. This is an uncharacterized protein from Methanocaldococcus jannaschii (strain ATCC 43067 / DSM 2661 / JAL-1 / JCM 10045 / NBRC 100440) (Methanococcus jannaschii).